We begin with the raw amino-acid sequence, 134 residues long: Biopolymer transport protein exbD2 (134 aa).

Topologically, residues 1–17 (MRLGRRTSKQEEAQIDL) are cytoplasmic. A helical membrane pass occupies residues 18-38 (TSMLDIVFIMLIFFIVTSSFV). Topologically, residues 39–134 (RESGVEVNRP…KSIALAAEKP (96 aa)) are periplasmic.

It belongs to the ExbD/TolR family. The accessory proteins ExbB and ExbD seem to form a complex with TonB.

The protein resides in the cell inner membrane. Functionally, involved in the TonB-dependent energy-dependent transport of various receptor-bound substrates. This chain is Biopolymer transport protein exbD2 (exbD2), found in Vibrio cholerae serotype O1 (strain ATCC 39315 / El Tor Inaba N16961).